Consider the following 469-residue polypeptide: MSAVLTPAGFTDYKVADISLADWGRKELIIAESEMPALMGLRRKYAASQPLKGAKILGCIHMTIQTGVLIETLTALGAEVRWSSCNIFSTQDQAAAAIAAAGIPVFAWKGETEEEYEWCIEQTILKDGKPWDANMVLDDGGDLTEILHKKYPQMLERIHGITEETTTGVHRLLDMLKAGTLKVPAINVNDAVTKSKNDNKYGCRHSLNDAIKRGTDHLLSGKQALVIGYGDVGKGSAQSLRQEGMIVKVSEIDPICAMQACMDGFELVSPYKNGINDGTESSVDAALLGKIDLIVTTTGNVNVCDAGMLKALKKRAVVCNIGHFDNEIDTAFMRKNWAWEEVKPQVHKIHRTGAGQFDPTNDDYLILLAEGRLVNLGNATGHPSRIMDGSFANQVLAQIFLFEQKFADLPAEKKAERLTVEVLPKKLDEEVALEMVKGFGGVVTQLTKQQAEYIGVTVEGPFKPDTYRY.

3 residues coordinate substrate: Thr-63, Asp-139, and Glu-164. 165-167 (TTT) contributes to the NAD(+) binding site. 2 residues coordinate substrate: Lys-194 and Asp-198. NAD(+) contacts are provided by residues Asn-199, 228–233 (GYGDVG), Glu-251, Asn-300, 321–323 (IGH), and Asn-375.

This sequence belongs to the adenosylhomocysteinase family. NAD(+) serves as cofactor.

The protein resides in the cytoplasm. The catalysed reaction is S-adenosyl-L-homocysteine + H2O = L-homocysteine + adenosine. The protein operates within amino-acid biosynthesis; L-homocysteine biosynthesis; L-homocysteine from S-adenosyl-L-homocysteine: step 1/1. Its function is as follows. May play a key role in the regulation of the intracellular concentration of adenosylhomocysteine. This Ectopseudomonas mendocina (strain ymp) (Pseudomonas mendocina) protein is Adenosylhomocysteinase.